Consider the following 143-residue polypeptide: Actin-depolymerizing factor 2 (143 aa).

The 135-residue stretch at 5 to 139 (ASGMAVHDDC…GLDVFRSRAG (135 aa)) folds into the ADF-H domain.

It belongs to the actin-binding proteins ADF family.

Actin-depolymerizing protein. Severs actin filaments (F-actin) and binds to actin monomers. This is Actin-depolymerizing factor 2 (ADF2) from Petunia hybrida (Petunia).